The chain runs to 563 residues: Putative cytochrome c oxidase subunit 1-beta (563 aa).

Transmembrane regions (helical) follow at residues 34-54, 76-96, 117-137, 164-184, 208-228, 252-272, and 284-304; these read IGHL…VMAL, LFTL…FAGF, MLSY…LAVP, MWIM…VNFL, LFTS…LLVL, LFWF…FGII, and IFGY…SVVV. Position 80 (His-80) interacts with Fe(II)-heme a. Residues His-258 and Tyr-262 each contribute to the Cu cation site. The 1'-histidyl-3'-tyrosine (His-Tyr) cross-link spans 258 to 262; that stretch reads HPEVY. Positions 307 and 308 each coordinate Cu cation. 2 helical membrane passes run 309–329 and 353–373; these read MFAT…LIAV and MLWA…GVIL. His-391 contacts heme a3. Transmembrane regions (helical) follow at residues 392–412, 427–447, and 470–490; these read FHYV…YFWW, IHFW…HWLG, and LSTI…YNVW. Fe(II)-heme a is bound at residue His-393. Positions 536-563 are disordered; that stretch reads AFDLHHPAHAGEAPQPEPKHEQADREPS. Residues 552-563 show a composition bias toward basic and acidic residues; it reads EPKHEQADREPS.

Belongs to the heme-copper respiratory oxidase family. Associates with subunits II, III and IV to form cytochrome c oxidase. Requires Cu(2+) as cofactor. It depends on heme as a cofactor.

It localises to the cell membrane. It catalyses the reaction 4 Fe(II)-[cytochrome c] + O2 + 8 H(+)(in) = 4 Fe(III)-[cytochrome c] + 2 H2O + 4 H(+)(out). It functions in the pathway energy metabolism; oxidative phosphorylation. Its function is as follows. Cytochrome c oxidase is the component of the respiratory chain that catalyzes the reduction of oxygen to water. Subunits 1-3 form the functional core of the enzyme complex. CO I is the catalytic subunit of the enzyme. Electrons originating in cytochrome c are transferred via the copper A center of subunit 2 and heme A of subunit 1 to the bimetallic center formed by heme A3 and copper B. This is Putative cytochrome c oxidase subunit 1-beta (ctaD2) from Streptomyces avermitilis (strain ATCC 31267 / DSM 46492 / JCM 5070 / NBRC 14893 / NCIMB 12804 / NRRL 8165 / MA-4680).